We begin with the raw amino-acid sequence, 139 residues long: Putative pre-16S rRNA nuclease (139 aa).

It belongs to the YqgF nuclease family.

Its subcellular location is the cytoplasm. Its function is as follows. Could be a nuclease involved in processing of the 5'-end of pre-16S rRNA. This Legionella pneumophila subsp. pneumophila (strain Philadelphia 1 / ATCC 33152 / DSM 7513) protein is Putative pre-16S rRNA nuclease.